The sequence spans 444 residues: Ribosomal protein uS12 methylthiotransferase RimO (444 aa).

Residues 4–118 (YKIGLISLGC…IQNYIDDFFN (115 aa)) enclose the MTTase N-terminal domain. Cys-13, Cys-48, Cys-81, Cys-155, Cys-159, and Cys-162 together coordinate [4Fe-4S] cluster. The region spanning 141 to 371 (TTAKHMAYIR…MSIQQNVSSK (231 aa)) is the Radical SAM core domain. In terms of domain architecture, TRAM spans 374-440 (KNKLEKVYKV…EYDLIGVVCD (67 aa)).

The protein belongs to the methylthiotransferase family. RimO subfamily. [4Fe-4S] cluster serves as cofactor.

It is found in the cytoplasm. The catalysed reaction is L-aspartate(89)-[ribosomal protein uS12]-hydrogen + (sulfur carrier)-SH + AH2 + 2 S-adenosyl-L-methionine = 3-methylsulfanyl-L-aspartate(89)-[ribosomal protein uS12]-hydrogen + (sulfur carrier)-H + 5'-deoxyadenosine + L-methionine + A + S-adenosyl-L-homocysteine + 2 H(+). Its function is as follows. Catalyzes the methylthiolation of an aspartic acid residue of ribosomal protein uS12. The polypeptide is Ribosomal protein uS12 methylthiotransferase RimO (Clostridium novyi (strain NT)).